Consider the following 335-residue polypeptide: Phosphate acyltransferase (335 aa).

This sequence belongs to the PlsX family. As to quaternary structure, homodimer. Probably interacts with PlsY.

The protein localises to the cytoplasm. The enzyme catalyses a fatty acyl-[ACP] + phosphate = an acyl phosphate + holo-[ACP]. It functions in the pathway lipid metabolism; phospholipid metabolism. Functionally, catalyzes the reversible formation of acyl-phosphate (acyl-PO(4)) from acyl-[acyl-carrier-protein] (acyl-ACP). This enzyme utilizes acyl-ACP as fatty acyl donor, but not acyl-CoA. In Desulfitobacterium hafniense (strain Y51), this protein is Phosphate acyltransferase.